A 394-amino-acid polypeptide reads, in one-letter code: Gap junction gamma-1 protein (394 aa).

Over 1-22 (MSWSFLTRLLEEIHNHSTFVGK) the chain is Cytoplasmic. The helical transmembrane segment at 23-45 (IWLSVLIVFRIVLTAVGGESIYY) threads the bilayer. The Extracellular segment spans residues 46 to 75 (DEQSKFVCNTEQPGCENVCYDAFAPLSHVR). Residues 76–95 (FWVFQIILVATPSVMYLGYA) traverse the membrane as a helical segment. Topologically, residues 96–176 (IHKIARMVEH…RRIREDGLMR (81 aa)) are cytoplasmic. A helical membrane pass occupies residues 177 to 199 (IYVLQLLVRATFEVGFLIGQYLL). Topologically, residues 200-229 (YGFEVSPVFVCSRKPCPHKIDCFISRPTEK) are extracellular. The helical transmembrane segment at 230-252 (TIFLLIMYGVSCMCLLLNVWEML) threads the bilayer. Topologically, residues 253-394 (HLGFGTIRDT…SGDGKNSVWI (142 aa)) are cytoplasmic. Positions 354–394 (IQAYNNQNNPGSSSREKKSKAGSNKSSASSKSGDGKNSVWI) are disordered. Over residues 356 to 366 (AYNNQNNPGSS) the composition is skewed to polar residues. Residues 374–394 (AGSNKSSASSKSGDGKNSVWI) show a composition bias toward low complexity.

It belongs to the connexin family. Gamma-type subfamily. As to quaternary structure, a connexon is composed of a hexamer of connexins. As to expression, mostly in heart and stomach.

It localises to the cell membrane. It is found in the cell junction. The protein localises to the gap junction. Its function is as follows. One gap junction consists of a cluster of closely packed pairs of transmembrane channels, the connexons, through which materials of low MW diffuse from one cell to a neighboring cell. This Gallus gallus (Chicken) protein is Gap junction gamma-1 protein (GJC1).